The primary structure comprises 76 residues: Exodeoxyribonuclease 7 small subunit (76 aa).

It belongs to the XseB family. As to quaternary structure, heterooligomer composed of large and small subunits.

The protein localises to the cytoplasm. The enzyme catalyses Exonucleolytic cleavage in either 5'- to 3'- or 3'- to 5'-direction to yield nucleoside 5'-phosphates.. Bidirectionally degrades single-stranded DNA into large acid-insoluble oligonucleotides, which are then degraded further into small acid-soluble oligonucleotides. The sequence is that of Exodeoxyribonuclease 7 small subunit from Legionella pneumophila (strain Paris).